The following is a 528-amino-acid chain: PC4 and SFRS1-interacting protein (528 aa).

One can recognise a PWWP domain in the interval 7–64 (PGDLIFAKMKGYPHWPARVDEVPDGAVKPPTNKLPIFFFGTHETAFLGPKDIFPYSEN). Residues 61 to 348 (YSENKEKYGK…EKKRETSMDS (288 aa)) form a disordered region. Lysine 75 is covalently cross-linked (Glycyl lysine isopeptide (Lys-Gly) (interchain with G-Cter in SUMO2)). The segment covering 92–106 (FSSQQASTKQSNASS) has biased composition (polar residues). Phosphoserine occurs at positions 102, 105, and 106. Residues 113–135 (KETNVSKEDTDQEEKASNEDVTK) show a composition bias toward basic and acidic residues. Phosphothreonine occurs at positions 115 and 122. A Phosphoserine modification is found at serine 129. Position 141 is a phosphothreonine (threonine 141). A compositionally biased stretch (basic residues) spans 144–153 (AARRGRKRKA). Residues 146 to 156 (RRGRKRKAEKQ) carry the Nuclear localization signal motif. 2 positions are modified to phosphoserine: serine 176 and serine 205. Residues 212–260 (DEDKSKKKGPEEKQPKKQLKKEEEGQKEEEKPRKEPDKKEGKKEVESKR) are compositionally biased toward basic and acidic residues. Serine 270 is modified (phosphoserine). The residue at position 271 (threonine 271) is a Phosphothreonine. Residues serine 272 and serine 274 each carry the phosphoserine modification. Residues 285–300 (KRKGGRNFQAAHRRNM) show a composition bias toward basic residues. A compositionally biased stretch (basic and acidic residues) spans 303 to 348 (GQHEKEAGDRKRKQEEQMETEQQNKDEGKKPEVKKVEKKRETSMDS). 2 coiled-coil regions span residues 306 to 332 (EKEA…EGKK) and 369 to 393 (NRCI…KHTE). The tract at residues 338–415 (VEKKRETSMD…VSQVIMEKST (78 aa)) is integrase-binding domain (IBD). Serine 432 is subject to Phosphoserine. Threonine 435 is subject to Phosphothreonine. Serine 441 is subject to Phosphoserine. The segment covering 444-471 (EQRQHEEANKTKDQGKKGPNKKLEKEPT) has biased composition (basic and acidic residues). Residues 444–528 (EQRQHEEANK…ISLKESTLDN (85 aa)) form a disordered region. Residues 472–492 (GTKSLNGGSDAQESNHPQHNG) are compositionally biased toward polar residues. The span at 496 to 528 (EDGKDSREASSKTKPPGEEREAEISLKESTLDN) shows a compositional bias: basic and acidic residues. Residue arginine 515 is modified to Citrulline. A Phosphoserine modification is found at serine 520. Threonine 525 is modified (phosphothreonine).

This sequence belongs to the HDGF family. In terms of assembly, monomer. Interacts with IFRD1/PC4. Interacts (via IBD domain) with POGZ (via IBM motif) and CDCA7L (via IBM motifs). Interacts (via IBD domain) with KMT2A (via IBM motifs) with a moderate affinity whereas interacts with the KMT2A-MEN1 complex with a greater affinity; MEN1 enhances interaction of KMT2A with PSIP1. Interacts (via IBD domain) with IWS1 (via IBM motif), MED1 (via IBM motif) and DBF4 (via IBM motifs). Citrullinated by PADI4.

The protein resides in the nucleus. Functionally, transcriptional coactivator involved in neuroepithelial stem cell differentiation and neurogenesis. Involved in particular in lens epithelial cell gene regulation and stress responses. May play an important role in lens epithelial to fiber cell terminal differentiation. May play a protective role during stress-induced apoptosis. The chain is PC4 and SFRS1-interacting protein (Psip1) from Mus musculus (Mouse).